We begin with the raw amino-acid sequence, 921 residues long: Isoleucine--tRNA ligase (921 aa).

The 'HIGH' region motif lies at 57 to 67 (PYANGDIHMGH). Position 552 (Glu-552) interacts with L-isoleucyl-5'-AMP. A 'KMSKS' region motif is present at residues 593–597 (KMSKS). Residue Lys-596 coordinates ATP. Zn(2+) is bound by residues Cys-888, Cys-891, Cys-908, and Cys-911.

Belongs to the class-I aminoacyl-tRNA synthetase family. IleS type 1 subfamily. Monomer. Requires Zn(2+) as cofactor.

The protein resides in the cytoplasm. It catalyses the reaction tRNA(Ile) + L-isoleucine + ATP = L-isoleucyl-tRNA(Ile) + AMP + diphosphate. Catalyzes the attachment of isoleucine to tRNA(Ile). As IleRS can inadvertently accommodate and process structurally similar amino acids such as valine, to avoid such errors it has two additional distinct tRNA(Ile)-dependent editing activities. One activity is designated as 'pretransfer' editing and involves the hydrolysis of activated Val-AMP. The other activity is designated 'posttransfer' editing and involves deacylation of mischarged Val-tRNA(Ile). The polypeptide is Isoleucine--tRNA ligase (Bacillus cytotoxicus (strain DSM 22905 / CIP 110041 / 391-98 / NVH 391-98)).